Reading from the N-terminus, the 327-residue chain is S-adenosylmethionine/S-adenosylhomocysteine transporter (327 aa).

A run of 10 helical transmembrane segments spans residues 22 to 42, 53 to 73, 85 to 105, 114 to 134, 143 to 163, 165 to 185, 202 to 222, 240 to 260, 271 to 291, and 294 to 314; these read CDMA…SFAL, LFVT…LLLC, IMPI…LEFI, TACF…YVQL, LGGL…GGSE, VAEW…ATCL, SLSM…LSLI, LFLQ…YNLF, FLSF…WLLL, and SFPP…RLIY. Positions 34-157 constitute an EamA 1 domain; sequence FIWSSSFALS…LGLVSYLVYL (124 aa). The EamA 2 domain occupies 189 to 313; that stretch reads GWTLLRKLGR…GFMVLGCRLI (125 aa).

This sequence belongs to the drug/metabolite transporter (DMT) superfamily. 10 TMS drug/metabolite exporter (DME) (TC 2.A.7.3) family.

The protein localises to the cell membrane. With respect to regulation, CCCP treatment reduces SAM intracellular uptake by 50%. Functionally, transports S-adenosylmethionine (SAM) and S-adenosylhomocysteine (SAH). Allows bacteria to acquire SAM from the eukaryotic host cell and to likely remove the toxic by-product SAH. This is S-adenosylmethionine/S-adenosylhomocysteine transporter from Chlamydia trachomatis serovar L2 (strain ATCC VR-902B / DSM 19102 / 434/Bu).